Reading from the N-terminus, the 206-residue chain is Large ribosomal subunit protein uL3 (206 aa).

The disordered stretch occupies residues 127–151 (SGGPSSHGSKFHRHLGGTGQATTPA).

Belongs to the universal ribosomal protein uL3 family. As to quaternary structure, part of the 50S ribosomal subunit. Forms a cluster with proteins L14 and L19.

Functionally, one of the primary rRNA binding proteins, it binds directly near the 3'-end of the 23S rRNA, where it nucleates assembly of the 50S subunit. The chain is Large ribosomal subunit protein uL3 from Borrelia garinii subsp. bavariensis (strain ATCC BAA-2496 / DSM 23469 / PBi) (Borreliella bavariensis).